Consider the following 135-residue polypeptide: Evasin P1134 (135 aa).

The signal sequence occupies residues 1-31 (MEVKTFAFLQIAVFIALGIQIFAAVTAAADA). Cystine bridges form between C41–C63, C45–C65, and C56–C76. An N-linked (GlcNAc...) asparagine glycan is attached at N44. The disordered stretch occupies residues 88-112 (ETPSNSDLEAATPRPRKTLYPVRNP).

It localises to the secreted. Salivary chemokine-binding protein which binds to host chemokine CXCL1. The sequence is that of Evasin P1134 from Ixodes ricinus (Common tick).